We begin with the raw amino-acid sequence, 299 residues long: Ribosomal RNA small subunit methyltransferase H (299 aa).

Residues 45–47 (GGH), D64, F92, D108, and Q115 each bind S-adenosyl-L-methionine. Residues 275–299 (PQSDEQAKNPRSRSAKLRLAQRKEQ) form a disordered region. Over residues 284 to 299 (PRSRSAKLRLAQRKEQ) the composition is skewed to basic residues.

Belongs to the methyltransferase superfamily. RsmH family.

Its subcellular location is the cytoplasm. The enzyme catalyses cytidine(1402) in 16S rRNA + S-adenosyl-L-methionine = N(4)-methylcytidine(1402) in 16S rRNA + S-adenosyl-L-homocysteine + H(+). Functionally, specifically methylates the N4 position of cytidine in position 1402 (C1402) of 16S rRNA. The protein is Ribosomal RNA small subunit methyltransferase H of Gloeothece citriformis (strain PCC 7424) (Cyanothece sp. (strain PCC 7424)).